A 352-amino-acid chain; its full sequence is Transcription factor BHLH156 (352 aa).

The interval 59 to 141 is disordered; the sequence is GGDDDDNGGV…RSKTIVSERK (83 aa). The interval 130–143 is basic motif; that stretch reads RDRSKTIVSERKRR. Positions 130-179 constitute a bHLH domain; it reads RDRSKTIVSERKRRVRMKEKLYELRALVPNITKMDKASIIADAVVYVKDL. A helix-loop-helix motif region spans residues 144–179; that stretch reads VRMKEKLYELRALVPNITKMDKASIIADAVVYVKDL. The interval 194–216 is disordered; it reads EEARPIRPPPPSAAAQRPQRQPR. A compositionally biased stretch (low complexity) spans 206–216; that stretch reads AAAQRPQRQPR.

Belongs to the bHLH protein family. As to quaternary structure, forms homodimers. Interacts with IRO2 in the nucleus. In terms of tissue distribution, expressed in the meristematic zone of lateral and primary roots.

It localises to the nucleus. In terms of biological role, transcription factor involved in positive regulation of genes involved in strategy II iron acquisition, including genes for mugineic acid (MA) family phytosiderophores biosynthesis, and genes involved in S-adenosylmethionine cycle and iron transport. May play a role in the regulation of iron deficiency response by promoting the nuclear localization of IRO2. Possesses transactivation activity in yeast. The chain is Transcription factor BHLH156 from Oryza sativa subsp. japonica (Rice).